The sequence spans 153 residues: Ubiquitin-conjugating enzyme E2 ubc-18 (153 aa).

The region spanning 2 to 149 (SATRRLQKEL…AEEHTRKHAE (148 aa)) is the UBC core domain. The Glycyl thioester intermediate role is filled by cysteine 86.

This sequence belongs to the ubiquitin-conjugating enzyme family. In terms of assembly, interacts with E3 ubiquitin-protein ligase wwp-1. Interacts with RBR-type E3 ubiquitin transferase ari-1.1. As to expression, expressed in neurons localized in the head and tail of adults.

It carries out the reaction S-ubiquitinyl-[E1 ubiquitin-activating enzyme]-L-cysteine + [E2 ubiquitin-conjugating enzyme]-L-cysteine = [E1 ubiquitin-activating enzyme]-L-cysteine + S-ubiquitinyl-[E2 ubiquitin-conjugating enzyme]-L-cysteine.. In terms of biological role, ubiquitin-conjugating enzyme E2. Accepts ubiquitin from the E1 complex and catalyzes its covalent attachment to other proteins. Required for diet restriction-mediated lifespan extension, probably acting as part of a complex with ubiquitin-protein ligase wwp-1. Acts redundantly with lin-35/Rb in the regulation of pharyngeal morphogenesis during embryonic development by negatively regulating the expression of proteins such as sup-35. In Caenorhabditis elegans, this protein is Ubiquitin-conjugating enzyme E2 ubc-18.